Here is a 505-residue protein sequence, read N- to C-terminus: ATP synthase subunit alpha (505 aa).

170–177 (GDRQTGKT) provides a ligand contact to ATP.

The protein belongs to the ATPase alpha/beta chains family. F-type ATPases have 2 components, CF(1) - the catalytic core - and CF(0) - the membrane proton channel. CF(1) has five subunits: alpha(3), beta(3), gamma(1), delta(1), epsilon(1). CF(0) has four main subunits: a(1), b(1), b'(1) and c(9-12).

Its subcellular location is the cellular thylakoid membrane. It catalyses the reaction ATP + H2O + 4 H(+)(in) = ADP + phosphate + 5 H(+)(out). Produces ATP from ADP in the presence of a proton gradient across the membrane. The alpha chain is a regulatory subunit. The protein is ATP synthase subunit alpha of Prochlorococcus marinus subsp. pastoris (strain CCMP1986 / NIES-2087 / MED4).